A 427-amino-acid chain; its full sequence is Serine hydroxymethyltransferase (427 aa).

(6S)-5,6,7,8-tetrahydrofolate contacts are provided by residues Leu122 and 126 to 128; that span reads GHL. Lys231 bears the N6-(pyridoxal phosphate)lysine mark. 355 to 357 contributes to the (6S)-5,6,7,8-tetrahydrofolate binding site; sequence SPF.

It belongs to the SHMT family. In terms of assembly, homodimer. The cofactor is pyridoxal 5'-phosphate.

The protein localises to the cytoplasm. It carries out the reaction (6R)-5,10-methylene-5,6,7,8-tetrahydrofolate + glycine + H2O = (6S)-5,6,7,8-tetrahydrofolate + L-serine. The protein operates within one-carbon metabolism; tetrahydrofolate interconversion. It participates in amino-acid biosynthesis; glycine biosynthesis; glycine from L-serine: step 1/1. In terms of biological role, catalyzes the reversible interconversion of serine and glycine with tetrahydrofolate (THF) serving as the one-carbon carrier. This reaction serves as the major source of one-carbon groups required for the biosynthesis of purines, thymidylate, methionine, and other important biomolecules. Also exhibits THF-independent aldolase activity toward beta-hydroxyamino acids, producing glycine and aldehydes, via a retro-aldol mechanism. This is Serine hydroxymethyltransferase from Nostoc sp. (strain PCC 7120 / SAG 25.82 / UTEX 2576).